The chain runs to 151 residues: MILTIKPLQGKECNVQVTEDEKVSMVKELVSERLNIPANQQRLLYKGKALADEHRLSDYSIGPEAKLNLVVRPAGERSGMASSSSAVSGVWQTLSTVLAKHFSPADAAKVQEQLVKDYERSLRQLSLDDIERLAGRLLHPDSEGMDTSYMD.

The 76-residue stretch at 1–76 (MILTIKPLQG…LNLVVRPAGE (76 aa)) folds into the Ubiquitin-like domain.

In terms of assembly, component of the BAT3 complex.

The protein resides in the cytoplasm. It localises to the cytosol. In terms of biological role, component of the BAT3 complex, a multiprotein complex involved in the post-translational delivery of tail-anchored (TA) membrane proteins to the endoplasmic reticulum membrane. TA membrane proteins, also named type II transmembrane proteins, contain a single C-terminal transmembrane region. This chain is Ubiquitin-like protein 4A-B (ubl4ab), found in Salmo salar (Atlantic salmon).